Consider the following 293-residue polypeptide: 4-hydroxy-tetrahydrodipicolinate synthase 1 (293 aa).

Residue Thr46 participates in pyruvate binding. Tyr134 (proton donor/acceptor) is an active-site residue. Lys162 (schiff-base intermediate with substrate) is an active-site residue. Ile204 provides a ligand contact to pyruvate.

Belongs to the DapA family. As to quaternary structure, homotetramer; dimer of dimers.

The protein resides in the cytoplasm. The enzyme catalyses L-aspartate 4-semialdehyde + pyruvate = (2S,4S)-4-hydroxy-2,3,4,5-tetrahydrodipicolinate + H2O + H(+). The protein operates within amino-acid biosynthesis; L-lysine biosynthesis via DAP pathway; (S)-tetrahydrodipicolinate from L-aspartate: step 3/4. In terms of biological role, catalyzes the condensation of (S)-aspartate-beta-semialdehyde [(S)-ASA] and pyruvate to 4-hydroxy-tetrahydrodipicolinate (HTPA). The sequence is that of 4-hydroxy-tetrahydrodipicolinate synthase 1 from Clostridium acetobutylicum (strain ATCC 824 / DSM 792 / JCM 1419 / IAM 19013 / LMG 5710 / NBRC 13948 / NRRL B-527 / VKM B-1787 / 2291 / W).